Reading from the N-terminus, the 1105-residue chain is Carbamoyl phosphate synthase large chain (1105 aa).

The carboxyphosphate synthetic domain stretch occupies residues 1 to 402 (MPKRDDIEKV…ALGKAVRSLE (402 aa)). The ATP site is built by R129, R169, G175, G176, K208, V210, E215, G241, I242, H243, Q285, and E299. The 196-residue stretch at 133 to 328 (KTAMKNCGLE…IAKISALLAV (196 aa)) folds into the ATP-grasp 1 domain. Mg(2+) contacts are provided by Q285, E299, and N301. Positions 285, 299, and 301 each coordinate Mn(2+). The interval 403–542 (LDIAPKLDLR…STYNGMENET (140 aa)) is oligomerization domain. A carbamoyl phosphate synthetic domain region spans residues 543-945 (IPSKRRKIMV…AFAKAQLSAD (403 aa)). In terms of domain architecture, ATP-grasp 2 spans 667-858 (AKFLKQSGLS…VAKIAAKTII (192 aa)). R703, K742, L744, E749, G774, I775, H776, S777, Q817, and E829 together coordinate ATP. Mg(2+) contacts are provided by Q817, E829, and N831. Q817, E829, and N831 together coordinate Mn(2+). An MGS-like domain is found at 940–1101 (AQLSADGIST…QDIFYAQQNT (162 aa)). The allosteric domain stretch occupies residues 946–1105 (GISTKSLLVT…YAQQNTLLKK (160 aa)).

The protein belongs to the CarB family. As to quaternary structure, composed of two chains; the small (or glutamine) chain promotes the hydrolysis of glutamine to ammonia, which is used by the large (or ammonia) chain to synthesize carbamoyl phosphate. Tetramer of heterodimers (alpha,beta)4. The cofactor is Mg(2+). Mn(2+) serves as cofactor.

It catalyses the reaction hydrogencarbonate + L-glutamine + 2 ATP + H2O = carbamoyl phosphate + L-glutamate + 2 ADP + phosphate + 2 H(+). It carries out the reaction hydrogencarbonate + NH4(+) + 2 ATP = carbamoyl phosphate + 2 ADP + phosphate + 2 H(+). It functions in the pathway amino-acid biosynthesis; L-arginine biosynthesis; carbamoyl phosphate from bicarbonate: step 1/1. Its pathway is pyrimidine metabolism; UMP biosynthesis via de novo pathway; (S)-dihydroorotate from bicarbonate: step 1/3. Its function is as follows. Large subunit of the glutamine-dependent carbamoyl phosphate synthetase (CPSase). CPSase catalyzes the formation of carbamoyl phosphate from the ammonia moiety of glutamine, carbonate, and phosphate donated by ATP, constituting the first step of 2 biosynthetic pathways, one leading to arginine and/or urea and the other to pyrimidine nucleotides. The large subunit (synthetase) binds the substrates ammonia (free or transferred from glutamine from the small subunit), hydrogencarbonate and ATP and carries out an ATP-coupled ligase reaction, activating hydrogencarbonate by forming carboxy phosphate which reacts with ammonia to form carbamoyl phosphate. The sequence is that of Carbamoyl phosphate synthase large chain from Pseudothermotoga lettingae (strain ATCC BAA-301 / DSM 14385 / NBRC 107922 / TMO) (Thermotoga lettingae).